The following is a 139-amino-acid chain: Small ribosomal subunit protein bS16 (139 aa).

Positions Lys-84–Ala-139 are disordered.

The protein belongs to the bacterial ribosomal protein bS16 family.

In Streptomyces lividans, this protein is Small ribosomal subunit protein bS16.